We begin with the raw amino-acid sequence, 410 residues long: Lissencephaly-1 homolog A (410 aa).

Residues 7-39 enclose the LisH domain; sequence QRDELNRAIADYLRSNGYEEAYSVFKKEAELDM. Positions 56 to 83 form a coiled coil; the sequence is TSVIRLQKKVMELESKLNEAKEEINIGG. 7 WD repeats span residues 106 to 145, 148 to 187, 190 to 229, 232 to 271, 274 to 333, 336 to 375, and 378 to 410; these read GHRS…FERT, GHTD…CIRT, GHDH…CVKT, GHRE…CKAE, EHEH…CLMT, GHDN…CTKT, and AHEH…WECR.

Belongs to the WD repeat LIS1/nudF family. In terms of assembly, can self-associate. Component of the cytosolic PAF-AH (I) heterotetrameric enzyme, which is composed of PAFAH1B1 (beta), PAFAH1B2 (alpha2) and PAFAH1B3 (alpha1) subunits. The catalytic activity of the enzyme resides in the alpha1 (PAFAH1B3) and alpha2 (PAFAH1B2) subunits, whereas the beta subunit (PAFAH1B1) has regulatory activity. Trimer formation is not essential for the catalytic activity. Interacts with dynein, dynactin, nde1 and ndel1.

It is found in the cytoplasm. The protein localises to the cytoskeleton. Its subcellular location is the microtubule organizing center. The protein resides in the centrosome. In terms of biological role, regulatory subunit (beta subunit) of the cytosolic type I platelet-activating factor (PAF) acetylhydrolase (PAF-AH (I)), an enzyme that catalyzes the hydrolyze of the acetyl group at the sn-2 position of PAF and its analogs and participates in PAF inactivation. Regulates the PAF-AH (I) activity in a catalytic dimer composition-dependent manner. Positively regulates the activity of the minus-end directed microtubule motor protein dynein. May enhance dynein-mediated microtubule sliding by targeting dynein to the microtubule plus end. Required for several dynein- and microtubule-dependent processes such as the maintenance of Golgi integrity, the peripheral transport of microtubule fragments and the coupling of the nucleus and centrosome. May be required for proliferation of neuronal precursors and neuronal migration. The chain is Lissencephaly-1 homolog A (pafah1b1a) from Danio rerio (Zebrafish).